We begin with the raw amino-acid sequence, 914 residues long: TRPM8 channel-associated factor 3 (914 aa).

The Peptidase M60 domain maps to 533-832 (NSWVSTGLYL…TYLQLQEGFG (300 aa)).

This sequence belongs to the TCAF family. Prostate-specific. Present in both dorso-lateral and anterior prostate.

Its function is as follows. May play a role in the regulation of the cation channel TRPM8 activity. The protein is TRPM8 channel-associated factor 3 of Mus musculus (Mouse).